The sequence spans 80 residues: Cell division activator CedA (80 aa).

Belongs to the CedA family.

Functionally, activates the cell division inhibited by chromosomal DNA over-replication. In Salmonella arizonae (strain ATCC BAA-731 / CDC346-86 / RSK2980), this protein is Cell division activator CedA.